A 1405-amino-acid polypeptide reads, in one-letter code: DNA-directed RNA polymerase subunit beta' (1405 aa).

4 residues coordinate Zn(2+): Cys-70, Cys-72, Cys-85, and Cys-88. The Mg(2+) site is built by Asp-460, Asp-462, and Asp-464. 4 residues coordinate Zn(2+): Cys-815, Cys-889, Cys-896, and Cys-899. A disordered region spans residues 1363–1388; it reads LAHHAERRRRREDPESTANPSAFDVE.

The protein belongs to the RNA polymerase beta' chain family. In terms of assembly, the RNAP catalytic core consists of 2 alpha, 1 beta, 1 beta' and 1 omega subunit. When a sigma factor is associated with the core the holoenzyme is formed, which can initiate transcription. It depends on Mg(2+) as a cofactor. The cofactor is Zn(2+).

The enzyme catalyses RNA(n) + a ribonucleoside 5'-triphosphate = RNA(n+1) + diphosphate. Functionally, DNA-dependent RNA polymerase catalyzes the transcription of DNA into RNA using the four ribonucleoside triphosphates as substrates. In Chromohalobacter salexigens (strain ATCC BAA-138 / DSM 3043 / CIP 106854 / NCIMB 13768 / 1H11), this protein is DNA-directed RNA polymerase subunit beta'.